The following is a 95-amino-acid chain: Protein S100-A1 (95 aa).

2 consecutive EF-hand domains span residues 12 to 47 (IKVF…FLSA) and 49 to 84 (KDPM…LTVA). Ca(2+)-binding residues include Lys27, Glu32, Asp62, Asn64, Asp66, Glu68, and Glu73.

This sequence belongs to the S-100 family. Dimer of either two alpha chains, or two beta chains, or one alpha and one beta chain. Also forms heterodimers with S100P. Interacts with AGER. Interacts with CAPZA1. Interacts with FKBP4. Interacts with RYR1 and RYR2. Interacts with CACYBP in a calcium-dependent manner. Interacts with PPP5C (via TPR repeats); the interaction is calcium-dependent and modulates PPP5C activity. Interacts with ATP2A2 and PLN in a Ca(2+)-dependent manner. Interacts with mitochondrial F1-ATPase subunits ATP5F1A and ATP5F1B; these interactions increase F1-ATPase activity. Post-translationally, glutathionylated; glutathionylation increases affinity to calcium about 10-fold.

It is found in the cytoplasm. It localises to the sarcoplasmic reticulum. The protein localises to the mitochondrion. Functionally, small calcium binding protein that plays important roles in several biological processes such as Ca(2+) homeostasis, chondrocyte biology and cardiomyocyte regulation. In response to an increase in intracellular Ca(2+) levels, binds calcium which triggers conformational changes. These changes allow interactions with specific target proteins and modulate their activity. Regulates a network in cardiomyocytes controlling sarcoplasmic reticulum Ca(2+) cycling and mitochondrial function through interaction with the ryanodine receptors RYR1 and RYR2, sarcoplasmic reticulum Ca(2+)-ATPase/ATP2A2 and mitochondrial F1-ATPase. Facilitates diastolic Ca(2+) dissociation and myofilament mechanics in order to improve relaxation during diastole. In Misgurnus fossilis (Weatherfish), this protein is Protein S100-A1 (s100a1).